Consider the following 804-residue polypeptide: RasGAP-activating-like protein 1 (804 aa).

C2 domains lie at 1–105 (MAKS…DSWI) and 116–231 (VQGE…KGWF). Positions 21, 27, 74, 76, 82, 149, 155, 202, 204, and 210 each coordinate Ca(2+). Residues 317-545 (GLAGRFLDYL…SRVRDFLDRL (229 aa)) enclose the Ras-GAP domain. The PH domain maps to 565-672 (AIVREGYLLK…WLSALRKASA (108 aa)). The segment at 674–710 (NPNKLAACHPGAFRSARWTCCLQAERSAAGCSRTHSA) adopts a Btk-type zinc-finger fold. Zn(2+)-binding residues include His-682, Cys-693, Cys-694, and Cys-704.

Ca(2+) serves as cofactor. Highly expressed in thyroid and adrenal medulla, lower expression in brain, spinal cord and trachea. Expressed in melanocytes.

In terms of biological role, probable inhibitory regulator of the Ras-cyclic AMP pathway. Plays a role in dendrite formation by melanocytes. This Homo sapiens (Human) protein is RasGAP-activating-like protein 1.